Here is a 569-residue protein sequence, read N- to C-terminus: Dolichol kinase EVAN (569 aa).

Topologically, residues 1–22 (MKTTATSFVTGERVVVFVVVSR) are cytoplasmic. A helical transmembrane segment spans residues 23 to 43 (ILLSLPLSLISHGFSLFLLSL). At 44-67 (SAFLVEIRVETSPFLLSHFSSRRG) the chain is on the lumenal side. A helical membrane pass occupies residues 68–88 (ASSGILLGAVTLPSVMISKLV). Topologically, residues 89–108 (QLSRAISIHEAEQDELAHVT) are cytoplasmic. Residues 109-129 (MQYWAASASCCAILIYLSVIM) traverse the membrane as a helical segment. Residues 130–147 (SQVRKDESLSSSSIWLTR) are Lumenal-facing. A helical transmembrane segment spans residues 148-168 (VSLTGTVLYGVACFVSLSMIS). The Cytoplasmic segment spans residues 169 to 178 (HTGLNTSLKM). The chain crosses the membrane as a helical span at residues 179 to 199 (LWMLFHGLAAVKLIRHLLCTF). The Lumenal portion of the chain corresponds to 200–207 (PSCASIGE). Residues 208-228 (ALLVTSGLVLYFGDFLACTIA) traverse the membrane as a helical segment. Over 229–252 (KIFEKLIPVDLVSISYGIKRTETG) the chain is Cytoplasmic. Residues 253–273 (IIVQGLLLGLLLFPMVFRFVL) traverse the membrane as a helical segment. The Lumenal segment spans residues 274–296 (HIYESSLRKRDARQRNCSDAAKS). N289 carries N-linked (GlcNAc...) asparagine glycosylation. The helical transmembrane segment at 297–317 (VLFFVSLLFFMVVAVPSWMQF) threads the bilayer. Residues 318 to 340 (VHDFNQHPFLWVLTFVFSEPLKR) are Cytoplasmic-facing. A helical transmembrane segment spans residues 341 to 361 (LSLCIYWILLIVVSVSRFYNI). The Lumenal segment spans residues 362–369 (SRSSKVER). The chain crosses the membrane as a helical span at residues 370-390 (ILLRKYYHLMAVLMFLPALVL). The Cytoplasmic portion of the chain corresponds to 391 to 393 (QPK). The chain crosses the membrane as a helical span at residues 394-414 (FLDLAFGAALAVFVALEIIRI). The Lumenal segment spans residues 415–440 (WRIQPLGEPLHQFMNAFTDHRDSEHL). A helical transmembrane segment spans residues 441 to 461 (IVSHFSLLLGCALPIWMSSGF). At 462 to 464 (NDR) the chain is on the cytoplasmic side. Residues 465 to 485 (ALSPFAGILSLGIGDTMASMV) form a helical membrane-spanning segment. Topologically, residues 486-508 (GHKYGVLRWSKTGKKTVEGTAAG) are lumenal. Residues 487-503 (HKYGVLRWSKTGKKTVE) are CTP-binding. The chain crosses the membrane as a helical span at residues 509-529 (ITSMMAVCFVLVPILASMGYI). Residues 530-548 (LSQGWWSLLVAVTATGMLE) are Cytoplasmic-facing. A helical transmembrane segment spans residues 549 to 569 (AYTAQLDNAFIPLVFYSLLCL).

The protein belongs to the polyprenol kinase family.

The protein localises to the endoplasmic reticulum membrane. The catalysed reaction is a di-trans,poly-cis-dolichol + CTP = a di-trans,poly-cis-dolichyl phosphate + CDP + H(+). Its function is as follows. Essential for pollen development. Involved in protein N-glycosylation in the endoplasmic reticulum (ER), especially in the female gametophyte. Mediates pollen tube (PT) reception in synergids through protein glycosylation. The protein is Dolichol kinase EVAN of Arabidopsis thaliana (Mouse-ear cress).